Here is a 440-residue protein sequence, read N- to C-terminus: Tyrosine--tRNA ligase (440 aa).

Tyr46 is an L-tyrosine binding site. The 'HIGH' region signature appears at 51–60 (PTAASLHIGN). Residues Tyr181 and Gln185 each coordinate L-tyrosine. The 'KMSKS' region motif lies at 241 to 245 (KFGKS). An ATP-binding site is contributed by Lys244. Positions 373 to 439 (DRVIDAAQAA…GKKALGAVEN (67 aa)) constitute an S4 RNA-binding domain.

It belongs to the class-I aminoacyl-tRNA synthetase family. TyrS type 1 subfamily. In terms of assembly, homodimer.

The protein resides in the cytoplasm. The enzyme catalyses tRNA(Tyr) + L-tyrosine + ATP = L-tyrosyl-tRNA(Tyr) + AMP + diphosphate + H(+). Its function is as follows. Catalyzes the attachment of tyrosine to tRNA(Tyr) in a two-step reaction: tyrosine is first activated by ATP to form Tyr-AMP and then transferred to the acceptor end of tRNA(Tyr). In Bifidobacterium longum (strain NCC 2705), this protein is Tyrosine--tRNA ligase.